The following is a 188-amino-acid chain: Adrenodoxin, mitochondrial (188 aa).

The transit peptide at 1–64 (MAAAPGARLL…RPLSVSARAR (64 aa)) directs the protein to the mitochondrion. Ser-67 is modified (phosphoserine). The 107-residue stretch at 69-175 (DKITVHFKNR…NMTVRVPEAV (107 aa)) folds into the 2Fe-2S ferredoxin-type domain. Lys-70 carries the N6-acetyllysine; alternate modification. Lys-70 is subject to N6-succinyllysine; alternate. The [2Fe-2S] cluster site is built by Cys-110, Cys-116, Cys-119, and Cys-156. Lys-162 bears the N6-succinyllysine mark. Position 181 is a phosphoserine (Ser-181).

It belongs to the adrenodoxin/putidaredoxin family. As to quaternary structure, interacts with CYP11A1. It depends on [2Fe-2S] cluster as a cofactor.

Its subcellular location is the mitochondrion matrix. In terms of biological role, essential for the synthesis of various steroid hormones, participates in the reduction of mitochondrial cytochrome P450 for steroidogenesis. Transfers electrons from adrenodoxin reductase to CYP11A1, a cytochrome P450 that catalyzes cholesterol side-chain cleavage. Does not form a ternary complex with adrenodoxin reductase and CYP11A1 but shuttles between the two enzymes to transfer electrons. This chain is Adrenodoxin, mitochondrial (Fdx1), found in Mus musculus (Mouse).